The sequence spans 66 residues: uncharacterized protein (66 aa).

The segment covering 1-18 has biased composition (low complexity); sequence MSTTSSSSTFSTRTASLS. The segment at 1-22 is disordered; that stretch reads MSTTSSSSTFSTRTASLSQSYT.

This is an uncharacterized protein from Schizosaccharomyces pombe (strain 972 / ATCC 24843) (Fission yeast).